The primary structure comprises 341 residues: NADH-quinone oxidoreductase subunit H 2 (341 aa).

The next 8 helical transmembrane spans lie at 13–33, 82–102, 115–135, 161–181, 190–210, 248–268, 277–297, and 317–337; these read IIVI…IAYI, GVFL…WAVI, VGVL…IMAG, IGFV…TAIV, MLGW…VSAL, YVAI…GWLP, WVPG…LFAM, and VFLP…QFAG.

It belongs to the complex I subunit 1 family. NDH-1 is composed of 14 different subunits. Subunits NuoA, H, J, K, L, M, N constitute the membrane sector of the complex.

The protein localises to the cell inner membrane. It catalyses the reaction a quinone + NADH + 5 H(+)(in) = a quinol + NAD(+) + 4 H(+)(out). In terms of biological role, NDH-1 shuttles electrons from NADH, via FMN and iron-sulfur (Fe-S) centers, to quinones in the respiratory chain. The immediate electron acceptor for the enzyme in this species is believed to be ubiquinone. Couples the redox reaction to proton translocation (for every two electrons transferred, four hydrogen ions are translocated across the cytoplasmic membrane), and thus conserves the redox energy in a proton gradient. This subunit may bind ubiquinone. This is NADH-quinone oxidoreductase subunit H 2 from Rhodopseudomonas palustris (strain BisB5).